Reading from the N-terminus, the 431-residue chain is Enolase (431 aa).

Gln168 is a (2R)-2-phosphoglycerate binding site. Glu210 acts as the Proton donor in catalysis. Positions 247, 291, and 318 each coordinate Mg(2+). The (2R)-2-phosphoglycerate site is built by Lys343, Arg372, Ser373, and Lys394. Lys343 acts as the Proton acceptor in catalysis.

This sequence belongs to the enolase family. Component of the RNA degradosome, a multiprotein complex involved in RNA processing and mRNA degradation. Requires Mg(2+) as cofactor.

It is found in the cytoplasm. It localises to the secreted. The protein localises to the cell surface. It carries out the reaction (2R)-2-phosphoglycerate = phosphoenolpyruvate + H2O. The protein operates within carbohydrate degradation; glycolysis; pyruvate from D-glyceraldehyde 3-phosphate: step 4/5. In terms of biological role, catalyzes the reversible conversion of 2-phosphoglycerate (2-PG) into phosphoenolpyruvate (PEP). It is essential for the degradation of carbohydrates via glycolysis. The protein is Enolase of Acinetobacter baumannii (strain SDF).